The sequence spans 274 residues: MSSLIKEVEEAWQIKDKLLQDSSKLITLKQTLNDSIESLNQGTVRVCEKKENSWHVNEWVKKAILLYFITTESQLYNNNYNSWYDKVAPKFSADTDKNTFKEAAIRTVPGAIVRTGAYIAKNVVIMPSFINIGAYIDEGTMIDTWATIGSCAQIGKNCHISGGTGIGGVLEPLHAKPVIIEDNCFIGARSEIAEGVIVEEGAVISMGVFIGSSTKIVYRDTGEIIYGRIPAYSVVVPGVLPAKETGKPGLYCVVIVKQVDKTTRAKVRINDLLR.

Residues R106 and D143 each contribute to the substrate site.

This sequence belongs to the transferase hexapeptide repeat family. In terms of assembly, homotrimer.

It is found in the cytoplasm. It catalyses the reaction (S)-2,3,4,5-tetrahydrodipicolinate + succinyl-CoA + H2O = (S)-2-succinylamino-6-oxoheptanedioate + CoA. Its pathway is amino-acid biosynthesis; L-lysine biosynthesis via DAP pathway; LL-2,6-diaminopimelate from (S)-tetrahydrodipicolinate (succinylase route): step 1/3. The sequence is that of 2,3,4,5-tetrahydropyridine-2,6-dicarboxylate N-succinyltransferase from Rickettsia rickettsii (strain Sheila Smith).